Reading from the N-terminus, the 453-residue chain is Allantoinase (453 aa).

Zn(2+) contacts are provided by histidine 59, histidine 61, lysine 146, histidine 186, histidine 242, and aspartate 315. At lysine 146 the chain carries N6-carboxylysine.

It belongs to the metallo-dependent hydrolases superfamily. Allantoinase family. Homotetramer. Zn(2+) is required as a cofactor. In terms of processing, carboxylation allows a single lysine to coordinate two zinc ions.

It carries out the reaction (S)-allantoin + H2O = allantoate + H(+). Its pathway is nitrogen metabolism; (S)-allantoin degradation; allantoate from (S)-allantoin: step 1/1. Catalyzes the conversion of allantoin (5-ureidohydantoin) to allantoic acid by hydrolytic cleavage of the five-member hydantoin ring. This Escherichia coli (strain K12 / MC4100 / BW2952) protein is Allantoinase.